Here is a 288-residue protein sequence, read N- to C-terminus: CBY1-interacting BAR domain-containing protein 2 (288 aa).

Residues 6-217 (SRDSQVRVME…ESYDLEKDLE (212 aa)) are BAR-like. 2 disordered regions span residues 133-157 (QKSP…VDAS) and 256-288 (TIRS…RLNQ). Polar residues predominate over residues 138 to 157 (DRQTISQAETSVQRASVDAS). Residues 266–276 (SEDDSAEEDPV) show a composition bias toward acidic residues.

This sequence belongs to the CIBAR family. Homodimer (via BAR-like domain). Heterodimer (via BAR-like domain) with FAM92A. Interacts with CBY1.

It localises to the cytoplasm. Its subcellular location is the cytoskeleton. It is found in the microtubule organizing center. The protein localises to the centrosome. The protein resides in the centriole. It localises to the cilium basal body. Its function is as follows. May play a role in ciliogenesis. In cooperation with CBY1 may facilitate ciliogenesis likely by the recruitment and fusion of endosomal vesicles at distal appendages during early stages of ciliogenesis. This is CBY1-interacting BAR domain-containing protein 2 (CIBAR2) from Bos taurus (Bovine).